A 182-amino-acid polypeptide reads, in one-letter code: Mu-like prophage FluMu protein gp45 (182 aa).

Positions 159–182 are disordered; the sequence is TDHQSSGISGKNHDHEERVGKPVP. A compositionally biased stretch (basic and acidic residues) spans 169-182; the sequence is KNHDHEERVGKPVP.

This sequence to phage Mu protein gp45.

This is Mu-like prophage FluMu protein gp45 from Haemophilus influenzae (strain ATCC 51907 / DSM 11121 / KW20 / Rd).